The sequence spans 257 residues: 5'-nucleotidase SurE (257 aa).

Asp-8, Asp-9, Ser-40, and Asn-93 together coordinate a divalent metal cation.

This sequence belongs to the SurE nucleotidase family. Requires a divalent metal cation as cofactor.

Its subcellular location is the cytoplasm. It catalyses the reaction a ribonucleoside 5'-phosphate + H2O = a ribonucleoside + phosphate. Functionally, nucleotidase that shows phosphatase activity on nucleoside 5'-monophosphates. This chain is 5'-nucleotidase SurE, found in Phenylobacterium zucineum (strain HLK1).